The following is a 502-amino-acid chain: Probable cytosol aminopeptidase (502 aa).

2 residues coordinate Mn(2+): lysine 269 and aspartate 274. Lysine 281 is an active-site residue. Positions 292, 351, and 353 each coordinate Mn(2+). Arginine 355 is an active-site residue.

This sequence belongs to the peptidase M17 family. The cofactor is Mn(2+).

The protein resides in the cytoplasm. It catalyses the reaction Release of an N-terminal amino acid, Xaa-|-Yaa-, in which Xaa is preferably Leu, but may be other amino acids including Pro although not Arg or Lys, and Yaa may be Pro. Amino acid amides and methyl esters are also readily hydrolyzed, but rates on arylamides are exceedingly low.. It carries out the reaction Release of an N-terminal amino acid, preferentially leucine, but not glutamic or aspartic acids.. Its function is as follows. Presumably involved in the processing and regular turnover of intracellular proteins. Catalyzes the removal of unsubstituted N-terminal amino acids from various peptides. The protein is Probable cytosol aminopeptidase of Shewanella denitrificans (strain OS217 / ATCC BAA-1090 / DSM 15013).